The primary structure comprises 684 residues: MSAQDFLVELGTEELPPKTLVSLADAFLAGIEKGLAGAGLTYSAKQVYAAPRRLAVLITALATQQPDRSVNLDGPPRQAAFDADGNPTQAALGFAKKCGVDLSEIDQSGPKLRYSQTILGKPTTSLLPTIVEDSLNDLPIAKRMRWGARKEEFVRPTQWLVMLFGDQVVDCTILAQSAGRHSRGHRFHHPQDVRISSPAGYLSDLRAAHVLADFNERRQIISKRVDELATQQEGTAIVPPSLLDEVAGLVEWPVPLVCSFEERFLEVPQEALITTMQDNQKYFCLLDVDGKLLPRFITVANIESKDPAQIIAGNEKVVRPRLTDAEFFFKQDKKQKLETFNDRLKNVVFQAQLGSVFDKAERVSKLAAYIAPRIGGDAQRAARAGLLSKCDLSSEMVGEFPEMQGIAGYYYAKADGEPEDVALALNEQYMPRGAGAELPTTLTGAAVAIADKLDTLVGIFGIGMLPTGSKDPYALRRAALGILRILIEKKLDLNLVETVKFAVAQFGAKIKPAGLAEQVLDFIFDRLRARYEDEGVDVAVYLSVRALQPASALDFDQRVQAVQAFRKLPQAAALAAVNKRVSNLLSKAEGSIAQTVEPKYFDNANEFSLYSAIQQADHAIQPMAAERQYSESLARLAMLREPVDAFFEAVMVNAEDANVRANRYALLSRLRGLFLGVADISLLG.

It belongs to the class-II aminoacyl-tRNA synthetase family. In terms of assembly, tetramer of two alpha and two beta subunits.

The protein resides in the cytoplasm. It catalyses the reaction tRNA(Gly) + glycine + ATP = glycyl-tRNA(Gly) + AMP + diphosphate. The sequence is that of Glycine--tRNA ligase beta subunit from Pseudomonas syringae pv. syringae (strain B728a).